The chain runs to 464 residues: FERM domain-containing protein 8 (464 aa).

Met-1 is subject to N-acetylmethionine. A disordered region spans residues 1 to 22 (MDGTEGSAGQPGPAERSHRSSV). Residue Ser-24 is modified to Phosphoserine. The FERM domain maps to 30–376 (ADVLVYLADD…YCIELSQAAE (347 aa)). A disordered region spans residues 376–408 (EPAGPQDSATGSPSDPSSSLAPVQRPKLRRQGS). Residues Ser-383, Ser-387, and Ser-408 each carry the phosphoserine modification. Thr-419 carries the post-translational modification Phosphothreonine. 2 positions are modified to phosphoserine: Ser-439 and Ser-446.

In terms of assembly, interacts with iRhom1/RHBDF1 and iRhom2/RHBDF2 (via cytoplasmic N-termini); this interaction leads to mutual protein stabilization. Interacts with ADAM17; this interaction is indirect and mediated by iRhom proteins. Interacts with LRP6; this interaction affects LRP6-binding to AXIN1. Widely expressed, with high expression in heart and spleen.

The protein resides in the cytoplasm. Its subcellular location is the cytosol. It is found in the cell membrane. Functionally, promotes the cell surface stability of iRhom1/RHBDF1 and iRhom2/RHBDF2 and prevents their degradation via the endolysosomal pathway. By acting on iRhoms, involved in ADAM17-mediated shedding of TNF, amphiregulin/AREG, HBEGF and TGFA from the cell surface. Negatively regulates Wnt signaling, possibly by antagonizing the recruitment of AXIN1 to LRP6. The sequence is that of FERM domain-containing protein 8 (FRMD8) from Homo sapiens (Human).